The chain runs to 292 residues: GTP cyclohydrolase FolE2 (292 aa).

This sequence belongs to the GTP cyclohydrolase IV family.

It carries out the reaction GTP + H2O = 7,8-dihydroneopterin 3'-triphosphate + formate + H(+). Its pathway is cofactor biosynthesis; 7,8-dihydroneopterin triphosphate biosynthesis; 7,8-dihydroneopterin triphosphate from GTP: step 1/1. Its function is as follows. Converts GTP to 7,8-dihydroneopterin triphosphate. The chain is GTP cyclohydrolase FolE2 from Staphylococcus saprophyticus subsp. saprophyticus (strain ATCC 15305 / DSM 20229 / NCIMB 8711 / NCTC 7292 / S-41).